Reading from the N-terminus, the 211-residue chain is MSKVLFIKASPLPNEVSRSSQVAETFMAEYKAKNPSDTVEELVLYNTEVPLLDLELMTAGRELQAGKAFTDLAPDVQKKLNAYNALTEQFLAADKYVFVFPLWNLGIPPLLKAYIDTFVIAGKSFRYTEHGPEALLKDKKAILIHGSGGIYSAGPTSSFTHGEPYLRTILQFIGINVVPSIFVEGIDHNPSKEAEIVAAAKAVAQESAAEF.

Residues S10 and 17 to 19 (SRS) each bind FMN.

It belongs to the azoreductase type 1 family. Homodimer. FMN serves as cofactor.

It catalyses the reaction 2 a quinone + NADH + H(+) = 2 a 1,4-benzosemiquinone + NAD(+). The enzyme catalyses N,N-dimethyl-1,4-phenylenediamine + anthranilate + 2 NAD(+) = 2-(4-dimethylaminophenyl)diazenylbenzoate + 2 NADH + 2 H(+). Its function is as follows. Quinone reductase that provides resistance to thiol-specific stress caused by electrophilic quinones. Also exhibits azoreductase activity. Catalyzes the reductive cleavage of the azo bond in aromatic azo compounds to the corresponding amines. The protein is FMN-dependent NADH:quinone oxidoreductase 2 of Listeria monocytogenes serotype 4b (strain F2365).